The following is a 208-amino-acid chain: Probable hydrolase YcaC (208 aa).

Residue Cys118 is part of the active site.

In terms of assembly, homooctamer composed of two tetrameric rings.

The polypeptide is Probable hydrolase YcaC (ycaC) (Escherichia coli (strain K12)).